Reading from the N-terminus, the 292-residue chain is Hydroxysqualene synthase (292 aa).

This sequence belongs to the phytoene/squalene synthase family. HpnC subfamily.

It catalyses the reaction presqualene diphosphate + H2O = hydroxysqualene + diphosphate. The protein operates within secondary metabolite biosynthesis; hopanoid biosynthesis. Functionally, involved in the biosynthesis of the hopanoid precursor squalene (SQ) from farnesyl diphosphate (FPP). Catalyzes the second step, the conversion of presqualene diphosphate (PSPP) to hydroxysqualene (HSQ). The polypeptide is Hydroxysqualene synthase (Sinorhizobium fredii (strain NBRC 101917 / NGR234)).